Consider the following 1038-residue polypeptide: Translation initiation factor IF-2 (1038 aa).

The segment at 48–426 (DALQGPGGNA…RQRRQEYEAM (379 aa)) is disordered. Residues 58-87 (GKSAAKPGAPRKAAPAKPAAPSPAAAARPA) show a composition bias toward low complexity. Positions 88–99 (APKPGAPAPKPA) are enriched in pro residues. The span at 100-114 (EAPSSTPAAPSAPSA) shows a compositional bias: low complexity. Over residues 115 to 125 (GPRPGPKPAPK) the composition is skewed to pro residues. Over residues 126–141 (AAPVTPVPAAEFSAPA) the composition is skewed to low complexity. A compositionally biased stretch (pro residues) spans 142-153 (PAQPAAPQPQAP). Basic and acidic residues predominate over residues 177–199 (DGGRDGGQRDGGRGGERGGDRPA). A compositionally biased stretch (low complexity) spans 200–219 (RPAGQGAPRPGGARPAGPRP). The segment covering 261–277 (SGPGGAPRPQGGQGQGG) has biased composition (gly residues). The span at 299-315 (GNRPNPGMMPQRPAAGP) shows a compositional bias: low complexity. A compositionally biased stretch (gly residues) spans 319-406 (PGGGGRGPGG…GTQGAFGRPG (88 aa)). Residues 410 to 419 (RRGRKSKRQR) are compositionally biased toward basic residues. Positions 531–703 (SRPPVVTVMG…VVLTADASLD (173 aa)) constitute a tr-type G domain. The tract at residues 540–547 (GHVDHGKT) is G1. Residue 540-547 (GHVDHGKT) participates in GTP binding. Residues 565–569 (GITQH) are G2. A G3 region spans residues 590 to 593 (DTPG). Residues 590–594 (DTPGH) and 644–647 (NKID) each bind GTP. Positions 644–647 (NKID) are G4. The tract at residues 680-682 (SAK) is G5.

It belongs to the TRAFAC class translation factor GTPase superfamily. Classic translation factor GTPase family. IF-2 subfamily.

Its subcellular location is the cytoplasm. Its function is as follows. One of the essential components for the initiation of protein synthesis. Protects formylmethionyl-tRNA from spontaneous hydrolysis and promotes its binding to the 30S ribosomal subunits. Also involved in the hydrolysis of GTP during the formation of the 70S ribosomal complex. This Streptomyces griseus subsp. griseus (strain JCM 4626 / CBS 651.72 / NBRC 13350 / KCC S-0626 / ISP 5235) protein is Translation initiation factor IF-2.